Consider the following 648-residue polypeptide: UDP-galactose:fucoside alpha-3-galactosyltransferase (648 aa).

WD repeat units lie at residues 320 to 358 (NHTDIITSINSSDDGKLFTTSIDKSIKIWKFENTSGNDT), 372 to 420 (HKRG…IQTF), 422 to 461 (GHTGIINQLIVIPNSSYFFTCSDDNTIRQFDLNNINFKRV), 464 to 505 (GHNG…NIIK), 507 to 546 (NQGGWIRKIIYNDNLNQLISGGNDGTIKIWSCDNLNNFND), 556 to 595 (NENSSINDLQFDSDTNLIYCAFENGSLKSFKLTSNNNNNN), and 617 to 648 (HLNSSINCIHISKSLNLLFSGGFDKQIKSWDL).

The protein belongs to the glycosyltransferase 77 family. It depends on Mn(2+) as a cofactor.

The protein localises to the cytoplasm. The catalysed reaction is an alpha-L-fucosyl-(1-&gt;2)-beta-D-galactosyl derivative + UDP-alpha-D-galactose = an alpha-D-galactosyl-(1-&gt;3)-[alpha-L-fucosyl-(1-&gt;2)]-beta-D-galactosyl derivative + UDP + H(+). It functions in the pathway protein modification; protein glycosylation. Stimulated by dithiothreitol (DTT) in vitro. Totally inhibited by EDTA. Functionally, specifically catalyzes the transfer of a galactosyl residue to the hydroxyproline-linked saccharide on Skp1 protein (fpaA/fpaB). Catalyzes the formation of a Gal-alpha-1,3-Fuc linkage, leading to Gal-Fuc-Gal-GlcNAc-HyPro143-Skp1. This Dictyostelium discoideum (Social amoeba) protein is UDP-galactose:fucoside alpha-3-galactosyltransferase (agtA).